A 120-amino-acid chain; its full sequence is uncharacterized protein (120 aa).

This is an uncharacterized protein from Acanthamoeba polyphaga mimivirus (APMV).